We begin with the raw amino-acid sequence, 503 residues long: MSEQNHPQTEPQLDENQIIALRREKLHNIRQQRNAYPNDFKRDSFAADLHAQYGEIGKEELDPQGIPVKVAGRMMLKRQMGKASFATIQDVSGQIQLYLNNKGVSQEVLDDFNHWDLGDIVGAEGTLFKTNHGELTVRVSGIRLLSKSLRPLPDKHKGLSDQETKYRQRYVDLIANEESRNTFIKRSQIIQSVRNFMVGEHYLEVETPMMHPIPGGATAKPFVTHHNALDIPLYLRIAPELYLKRLVVGGLERVFEINRSFRNEGMSVRHNPEFTMIEFYEAFSDYERMMQMAEDIIRNASRTVNGTANITYNGKEVDLESPFERLTILEAIKKYNPHYTDEQLNDAEWLKKEIVKHGESLPPSPGIGSLQLALFEGCAEGKLWNPTFIVDYPVEVSPLARASDTKQGLTERFELFVVGRELANGYSELNDPEDQAERFKAQVVQKDAGDDEAMHYDADYIRAMEFGLPPTGGCGIGIDRLVMLLTDSQTIRDVILFPQMRPE.

Mg(2+) contacts are provided by glutamate 414 and glutamate 421.

Belongs to the class-II aminoacyl-tRNA synthetase family. As to quaternary structure, homodimer. It depends on Mg(2+) as a cofactor.

Its subcellular location is the cytoplasm. The enzyme catalyses tRNA(Lys) + L-lysine + ATP = L-lysyl-tRNA(Lys) + AMP + diphosphate. In Neisseria meningitidis serogroup B (strain ATCC BAA-335 / MC58), this protein is Lysine--tRNA ligase.